The sequence spans 432 residues: Adenylosuccinate synthetase (432 aa).

Residues 13–19 and 41–43 contribute to the GTP site; these read GDEGKGK and GHT. Asp-14 acts as the Proton acceptor in catalysis. Residues Asp-14 and Gly-41 each coordinate Mg(2+). IMP contacts are provided by residues 14-17, 39-42, Thr-130, Arg-144, Gln-225, Thr-240, and Arg-304; these read DEGK and NAGH. His-42 functions as the Proton donor in the catalytic mechanism. 300-306 contributes to the substrate binding site; sequence AVTGRPR. GTP-binding positions include Arg-306, 332-334, and 415-417; these read KLD and STG.

It belongs to the adenylosuccinate synthetase family. In terms of assembly, homodimer. It depends on Mg(2+) as a cofactor.

The protein resides in the cytoplasm. It catalyses the reaction IMP + L-aspartate + GTP = N(6)-(1,2-dicarboxyethyl)-AMP + GDP + phosphate + 2 H(+). It functions in the pathway purine metabolism; AMP biosynthesis via de novo pathway; AMP from IMP: step 1/2. Functionally, plays an important role in the de novo pathway of purine nucleotide biosynthesis. Catalyzes the first committed step in the biosynthesis of AMP from IMP. The protein is Adenylosuccinate synthetase of Actinobacillus succinogenes (strain ATCC 55618 / DSM 22257 / CCUG 43843 / 130Z).